Reading from the N-terminus, the 436-residue chain is Probable G-protein coupled receptor C06G4.5 (436 aa).

The Extracellular segment spans residues 1 to 53; that stretch reads MSTNLVDYVDDSYLNQSMNSENGLDSVTQIMYDMKKYNIVNDVLPPPNHEDLH. N15 is a glycosylation site (N-linked (GlcNAc...) asparagine). Residues 54–74 traverse the membrane as a helical segment; sequence VVIMAVSYLLLFLLGTCGNVA. Residues 75–94 are Cytoplasmic-facing; it reads VLTTIYHVIRSSRATLDNTL. Residues 95–115 traverse the membrane as a helical segment; the sequence is IYVIVLSCVDFGVCLSLPITV. The Extracellular portion of the chain corresponds to 116–132; that stretch reads IDQILGFWMFGKIPCKL. A helical transmembrane segment spans residues 133–153; it reads HAVFENFGKILSALILTAMSF. Over 154 to 171 the chain is Cytoplasmic; that stretch reads DRYAGVCHPQRKRLRSRN. A helical transmembrane segment spans residues 172–192; the sequence is FAITILLVLAVYAFITLCPLL. Residues 193-230 are Extracellular-facing; sequence WSFTAREIILYAKETAPGMLTRMKIEKCTVDIDSQMFT. Residues 231-251 traverse the membrane as a helical segment; sequence AFTIYQFILCYCTPLVLIAFF. Over 252–281 the chain is Cytoplasmic; sequence YTKLLSKLREHTRTFKSSQIPFLHISLYTL. A helical transmembrane segment spans residues 282–302; sequence AVACFYFLCWTPFWMATLFAV. The Extracellular portion of the chain corresponds to 303–316; it reads YLENSANSSSVPPV. N309 carries an N-linked (GlcNAc...) asparagine glycan. The chain crosses the membrane as a helical span at residues 317–337; the sequence is FVYIMYFIHALPFTNSAINWI. The Cytoplasmic segment spans residues 338 to 436; that stretch reads LYGALNGQLQ…LLSNHNPTFL (99 aa).

It belongs to the G-protein coupled receptor 1 family.

It is found in the cell membrane. Functionally, putative receptor. This is Probable G-protein coupled receptor C06G4.5 from Caenorhabditis elegans.